We begin with the raw amino-acid sequence, 1955 residues long: Protocadherin-15 (1955 aa).

A signal peptide spans 1-26; that stretch reads MFRQFYLWTCLASGIILGSLFEICLG. The Extracellular portion of the chain corresponds to 27–1376; sequence QYDDDCKLAR…GESLGYTEGA (1350 aa). A disulfide bond links C32 and C120. Cadherin domains follow at residues 40–147, 148–265, 278–395, 396–509, 510–616, 617–717, 719–819, 820–926, 927–1035, 1037–1144, and 1145–1259; these read PATI…SPTF, KHES…GPMF, RPLT…SPYF, TMPS…TPTF, PEIS…PPRF, PQLM…APVF, PYLP…SPVF, TNST…PPVF, SKRI…IPRF, QEEY…PPVF, and QKKF…PPTL. N52, N97, and N201 each carry an N-linked (GlcNAc...) asparagine glycan. 7 N-linked (GlcNAc...) asparagine glycosylation sites follow: N419, N559, N662, N724, N768, N821, and N851. N-linked (GlcNAc...) asparagine glycosylation is found at N1064, N1084, and N1175. Residues 1377 to 1397 form a helical membrane-spanning segment; that stretch reads LLALAFIIILCCIPAILVVLV. Over 1398–1955 the chain is Cytoplasmic; the sequence is SYRQFKVRQA…KQSHSQSTSL (558 aa). Residues 1426 to 1444 show a composition bias toward pro residues; the sequence is VPAPAPVAAPPPPPPPPPG. 4 disordered regions span residues 1426 to 1446, 1601 to 1623, 1745 to 1766, and 1928 to 1955; these read VPAP…PGAH, QGTR…GSSN, CPLP…APLA, and ITSE…STSL. A compositionally biased stretch (polar residues) spans 1928-1941; it reads ITSEQNKGSLNNIV.

In terms of assembly, antiparallel heterodimer with CDH23. Found in a complex with TMIE and LHFPL5. Interacts with LHFPL5/TMHS; this interaction is required for efficient localization to hair bundles. Interacts with MYO7A. Interacts with USH1G; this interaction may recruit USH1G to the plasma membrane. Interacts with TOMT. Isoforms CD1 and CD3 interact with TMC1 (via N-terminus) and TMC2 (via N-terminus). In terms of tissue distribution, expressed in brain, lung, kidney, spleen and testis. Found also in the inner and outer synaptic layers, and the nerve fiber layer in adult and fetal retinas. Found in the supporting cells, outer sulcus cells and spiral ganglion of fetal cochlea. Expressed in cytotoxic tumor-derived T- and NK-cell lines as well as biopsies of nasal NK/T-cell lymphomas. Not detected in normal or in vitro activated peripheral blood cells, CD4 or CD8 lymphocytes or NK cells. Isoform 3 is expressed in brain, heart, cerebellum and kidney. CD1 isoforms, such as isoform 1, have a limited pattern of expression and is detected in testis, retina and cochlea. CD2 isoforms, such as isoforms 4 and 5, are expressed in heart, kidney, thymus, spleen, testis, retina and cochlea. CD3 isoforms, such as isoform 6, are widely expressed.

Its subcellular location is the cell membrane. The protein resides in the secreted. Functionally, calcium-dependent cell-adhesion protein. Essential for maintenance of normal retinal and cochlear function. This is Protocadherin-15 (PCDH15) from Homo sapiens (Human).